A 107-amino-acid polypeptide reads, in one-letter code: MSKLFEVLERLAATIETRKGGDPTSSYTAKLLNDPALAAKKLGEEAVETVIAAVAQGPDALASESADLLYHWLVLVAASDVSLDAVADKLAAREGTSGLAEKAARPS.

Belongs to the PRA-PH family.

It is found in the cytoplasm. The catalysed reaction is 1-(5-phospho-beta-D-ribosyl)-ATP + H2O = 1-(5-phospho-beta-D-ribosyl)-5'-AMP + diphosphate + H(+). It functions in the pathway amino-acid biosynthesis; L-histidine biosynthesis; L-histidine from 5-phospho-alpha-D-ribose 1-diphosphate: step 2/9. This Caulobacter sp. (strain K31) protein is Phosphoribosyl-ATP pyrophosphatase.